We begin with the raw amino-acid sequence, 322 residues long: Crystallin J1B (322 aa).

It belongs to the ADP-ribosylglycohydrolase family. J1 crystallin subfamily. Expressed in the rhopalia. Present in both the large and small eyes.

In Tripedalia cystophora (Jellyfish), this protein is Crystallin J1B.